A 654-amino-acid polypeptide reads, in one-letter code: tRNA 5-methylaminomethyl-2-thiouridine biosynthesis bifunctional protein MnmC (654 aa).

The tRNA (mnm(5)s(2)U34)-methyltransferase stretch occupies residues Met-1 to Val-236. Residues Ile-262 to Lys-654 are FAD-dependent cmnm(5)s(2)U34 oxidoreductase.

It in the N-terminal section; belongs to the methyltransferase superfamily. tRNA (mnm(5)s(2)U34)-methyltransferase family. The protein in the C-terminal section; belongs to the DAO family. It depends on FAD as a cofactor.

It is found in the cytoplasm. It catalyses the reaction 5-aminomethyl-2-thiouridine(34) in tRNA + S-adenosyl-L-methionine = 5-methylaminomethyl-2-thiouridine(34) in tRNA + S-adenosyl-L-homocysteine + H(+). Its function is as follows. Catalyzes the last two steps in the biosynthesis of 5-methylaminomethyl-2-thiouridine (mnm(5)s(2)U) at the wobble position (U34) in tRNA. Catalyzes the FAD-dependent demodification of cmnm(5)s(2)U34 to nm(5)s(2)U34, followed by the transfer of a methyl group from S-adenosyl-L-methionine to nm(5)s(2)U34, to form mnm(5)s(2)U34. The protein is tRNA 5-methylaminomethyl-2-thiouridine biosynthesis bifunctional protein MnmC of Pseudomonas putida (strain GB-1).